The sequence spans 198 residues: Ribosomal RNA small subunit methyltransferase G (198 aa).

S-adenosyl-L-methionine-binding positions include Gly-74, Phe-79, 123–124 (IQ), and Arg-136.

This sequence belongs to the methyltransferase superfamily. RNA methyltransferase RsmG family.

The protein localises to the cytoplasm. It carries out the reaction guanosine(527) in 16S rRNA + S-adenosyl-L-methionine = N(7)-methylguanosine(527) in 16S rRNA + S-adenosyl-L-homocysteine. Specifically methylates the N7 position of guanine in position 527 of 16S rRNA. In Orientia tsutsugamushi (strain Boryong) (Rickettsia tsutsugamushi), this protein is Ribosomal RNA small subunit methyltransferase G.